We begin with the raw amino-acid sequence, 226 residues long: Ribonuclease 3 (226 aa).

In terms of domain architecture, RNase III spans 6–128 (INRLQRKLGY…LIGGIFLDSD (123 aa)). E41 contributes to the Mg(2+) binding site. D45 is a catalytic residue. Positions 114 and 117 each coordinate Mg(2+). The active site involves E117. Residues 155-225 (DPKTRLQEYL…AEQALKQLEL (71 aa)) form the DRBM domain.

Belongs to the ribonuclease III family. In terms of assembly, homodimer. Mg(2+) is required as a cofactor.

Its subcellular location is the cytoplasm. The catalysed reaction is Endonucleolytic cleavage to 5'-phosphomonoester.. Its function is as follows. Digests double-stranded RNA. Involved in the processing of primary rRNA transcript to yield the immediate precursors to the large and small rRNAs (23S and 16S). Processes some mRNAs, and tRNAs when they are encoded in the rRNA operon. Processes pre-crRNA and tracrRNA of type II CRISPR loci if present in the organism. In Yersinia enterocolitica serotype O:8 / biotype 1B (strain NCTC 13174 / 8081), this protein is Ribonuclease 3.